Consider the following 288-residue polypeptide: Tryptophan 2,3-dioxygenase (288 aa).

Substrate-binding positions include 57–61 (FIIQH), Y119, and R123. H246 contacts heme. T260 is a binding site for substrate.

The protein belongs to the tryptophan 2,3-dioxygenase family. As to quaternary structure, homotetramer. Requires heme as cofactor.

It catalyses the reaction L-tryptophan + O2 = N-formyl-L-kynurenine. It participates in amino-acid degradation; L-tryptophan degradation via kynurenine pathway; L-kynurenine from L-tryptophan: step 1/2. In terms of biological role, heme-dependent dioxygenase that catalyzes the oxidative cleavage of the L-tryptophan (L-Trp) pyrrole ring and converts L-tryptophan to N-formyl-L-kynurenine. Catalyzes the oxidative cleavage of the indole moiety. The chain is Tryptophan 2,3-dioxygenase from Pseudomonas aeruginosa (strain UCBPP-PA14).